A 302-amino-acid chain; its full sequence is Probable alpha-L-glutamate ligase (302 aa).

Positions 104-287 (MQLLSREGVG…VAGMIIEFIE (184 aa)) constitute an ATP-grasp domain. Residues Lys141, 178 to 179 (EF), Asp187, and 211 to 213 (RSN) each bind ATP. Positions 248, 260, and 262 each coordinate Mg(2+). Mn(2+) is bound by residues Asp248, Glu260, and Asn262.

This sequence belongs to the RimK family. Mg(2+) serves as cofactor. The cofactor is Mn(2+).

The polypeptide is Probable alpha-L-glutamate ligase (Halorhodospira halophila (strain DSM 244 / SL1) (Ectothiorhodospira halophila (strain DSM 244 / SL1))).